The primary structure comprises 473 residues: Ribulose bisphosphate carboxylase large chain (473 aa).

Substrate is bound by residues Asn-116 and Thr-166. The Proton acceptor role is filled by Lys-168. Position 170 (Lys-170) interacts with substrate. Positions 194, 196, and 197 each coordinate Mg(2+). Lys-194 is subject to N6-carboxylysine. The active-site Proton acceptor is the His-287. Arg-288, His-320, and Ser-372 together coordinate substrate.

Belongs to the RuBisCO large chain family. Type I subfamily. As to quaternary structure, heterohexadecamer of 8 large chains and 8 small chains. It depends on Mg(2+) as a cofactor.

It carries out the reaction 2 (2R)-3-phosphoglycerate + 2 H(+) = D-ribulose 1,5-bisphosphate + CO2 + H2O. The catalysed reaction is D-ribulose 1,5-bisphosphate + O2 = 2-phosphoglycolate + (2R)-3-phosphoglycerate + 2 H(+). Functionally, ruBisCO catalyzes two reactions: the carboxylation of D-ribulose 1,5-bisphosphate, the primary event in carbon dioxide fixation, as well as the oxidative fragmentation of the pentose substrate. Both reactions occur simultaneously and in competition at the same active site. In Rhodobacter capsulatus (strain ATCC BAA-309 / NBRC 16581 / SB1003), this protein is Ribulose bisphosphate carboxylase large chain.